The primary structure comprises 110 residues: MNEEMEQIIFQIILHGGNGRSSAMEAIAAAKSGDAEEARKKLQDAAEELSKAHHYQTELIQNEAGGEKTEMTLLMVHAQDHLMNAMTVKDMAAEIIELYEKITEQRGASI.

The PTS EIIA type-3 domain maps to 3 to 101; it reads EEMEQIIFQI…AAEIIELYEK (99 aa). H77 acts as the Tele-phosphohistidine intermediate; by HPr in catalysis.

The protein localises to the cytoplasm. Functionally, the phosphoenolpyruvate-dependent sugar phosphotransferase system (PTS), a major carbohydrate active -transport system, catalyzes the phosphorylation of incoming sugar substrates concomitant with their translocation across the cell membrane. This system is involved in lichenan transport. The protein is Lichenan-specific phosphotransferase enzyme IIA component (licA) of Bacillus subtilis (strain 168).